We begin with the raw amino-acid sequence, 110 residues long: Flagellar hook-basal body complex protein FliE (110 aa).

The protein belongs to the FliE family.

The protein localises to the bacterial flagellum basal body. The sequence is that of Flagellar hook-basal body complex protein FliE from Pseudomonas putida (strain GB-1).